A 373-amino-acid polypeptide reads, in one-letter code: tRNA-specific 2-thiouridylase MnmA (373 aa).

ATP is bound by residues 12–19 and M38; that span reads GMSGGVDS. Residues 98–100 are interaction with target base in tRNA; it reads NPD. Residue C103 is the Nucleophile of the active site. C103 and C200 form a disulfide bridge. Position 127 (G127) interacts with ATP. The tract at residues 150–152 is interaction with tRNA; the sequence is KDQ. C200 serves as the catalytic Cysteine persulfide intermediate. Residues 312–313 form an interaction with tRNA region; it reads RY.

This sequence belongs to the MnmA/TRMU family.

It is found in the cytoplasm. The enzyme catalyses S-sulfanyl-L-cysteinyl-[protein] + uridine(34) in tRNA + AH2 + ATP = 2-thiouridine(34) in tRNA + L-cysteinyl-[protein] + A + AMP + diphosphate + H(+). Functionally, catalyzes the 2-thiolation of uridine at the wobble position (U34) of tRNA, leading to the formation of s(2)U34. The chain is tRNA-specific 2-thiouridylase MnmA from Streptococcus pyogenes serotype M1.